Here is a 318-residue protein sequence, read N- to C-terminus: Ethyl acetate hydrolase (318 aa).

Active-site residues include Ser-165, Asp-261, and His-291.

This sequence belongs to the 'GDXG' lipolytic enzyme family. Monomer.

Its subcellular location is the cytoplasm. It catalyses the reaction ethyl acetate + H2O = ethanol + acetate + H(+). Inhibited by the serine protease inhibitor phenylmethylsulfonyl fluoride, the histidine reagent diethylpyrocarbonate and two sulfhydryl reagents, mercuric chloride and naphthol AS-D chloroacetate. Not inhibited by EDTA. Functionally, esterase that catalyzes the hydrolysis of ethyl acetate. Can also use propyl acetate and the chromogenic substrates alpha-naphthyl acetate, alpha-naphthyl propionate, alpha-naphthyl caproate and 4-nitrophenyl acetate, with a preference for short-chain aliphatic esters. Highest activity is obtained in vitro with propyl acetate, followed by ethyl acetate. In vivo, could be involved in pyoverdine biosynthesis, but its specific role and its in vivo substrate have not been identified. This Pseudomonas putida (Arthrobacter siderocapsulatus) protein is Ethyl acetate hydrolase.